The chain runs to 148 residues: Large ribosomal subunit protein uL15 (148 aa).

The interval 1-47 is disordered; it reads MAFSLENLRPAPGSRPKSKRVGRGSSSGKGKTSSRGHKGQGRGTGKV.

The protein belongs to the universal ribosomal protein uL15 family. In terms of assembly, part of the 50S ribosomal subunit.

Its function is as follows. Binds to the 23S rRNA. The protein is Large ribosomal subunit protein uL15 of Kosmotoga olearia (strain ATCC BAA-1733 / DSM 21960 / TBF 19.5.1).